Consider the following 150-residue polypeptide: Arginine repressor (150 aa).

This sequence belongs to the ArgR family.

It localises to the cytoplasm. The protein operates within amino-acid biosynthesis; L-arginine biosynthesis [regulation]. Regulates arginine biosynthesis genes. The chain is Arginine repressor from Clostridium kluyveri (strain NBRC 12016).